Reading from the N-terminus, the 108-residue chain is Nucleoid-associated protein Bphyt_1827 (108 aa).

Residues 87–108 (AQEKMGGMTSGLPLPPGFKLPF) form a disordered region. The span at 99-108 (PLPPGFKLPF) shows a compositional bias: pro residues.

It belongs to the YbaB/EbfC family. In terms of assembly, homodimer.

It is found in the cytoplasm. It localises to the nucleoid. Its function is as follows. Binds to DNA and alters its conformation. May be involved in regulation of gene expression, nucleoid organization and DNA protection. This chain is Nucleoid-associated protein Bphyt_1827, found in Paraburkholderia phytofirmans (strain DSM 17436 / LMG 22146 / PsJN) (Burkholderia phytofirmans).